The primary structure comprises 263 residues: Isoprenyl transferase (263 aa).

Aspartate 38 is a catalytic residue. Mg(2+) is bound at residue aspartate 38. Substrate contacts are provided by residues glycine 39–arginine 42, histidine 55, and serine 83–aspartate 85. Asparagine 86 (proton acceptor) is an active-site residue. Substrate is bound by residues phenylalanine 87, arginine 89, arginine 212, and arginine 218–serine 220. Mg(2+) is bound at residue glutamate 231.

This sequence belongs to the UPP synthase family. Homodimer. Mg(2+) serves as cofactor.

Its function is as follows. Catalyzes the condensation of isopentenyl diphosphate (IPP) with allylic pyrophosphates generating different type of terpenoids. The polypeptide is Isoprenyl transferase (Thermus thermophilus (strain ATCC 27634 / DSM 579 / HB8)).